A 24-amino-acid chain; its full sequence is SM-11044-binding protein (24 aa).

In terms of biological role, may mediate relaxation of depolarized colon tonus. It binds iodocyanopindolol and SM-11044. The protein is SM-11044-binding protein of Rattus norvegicus (Rat).